The chain runs to 229 residues: Adenylate kinase (229 aa).

An ATP-binding site is contributed by 10 to 15 (GSGKGT). The segment at 30 to 59 (ESGVIFREHISKGTELGKQAKSYIDKGELV) is NMP. Residues serine 31, arginine 36, 57 to 59 (ELV), 84 to 87 (GFPR), and glutamine 91 contribute to the AMP site. Positions 125–164 (GRRICKTNNNHPNNVSIDSIKPDGNNCRVCHGELIVRTDD) are LID. Arginine 126 is an ATP binding site. AMP-binding residues include arginine 161 and arginine 173. Asparagine 209 serves as a coordination point for ATP.

Belongs to the adenylate kinase family. As to quaternary structure, monomer.

It is found in the cytoplasm. It carries out the reaction AMP + ATP = 2 ADP. Its pathway is purine metabolism; AMP biosynthesis via salvage pathway; AMP from ADP: step 1/1. Functionally, catalyzes the reversible transfer of the terminal phosphate group between ATP and AMP. Plays an important role in cellular energy homeostasis and in adenine nucleotide metabolism. The protein is Adenylate kinase of Lawsonia intracellularis (strain PHE/MN1-00).